Here is a 300-residue protein sequence, read N- to C-terminus: PAK4-inhibitor INKA2 (300 aa).

3 disordered regions span residues 59 to 104, 178 to 201, and 230 to 288; these read GGTP…SSPK, LEKGGEKGETGGSIEPKGEKGQSR, and KEKP…LEPS. The span at 60-73 shows a compositional bias: polar residues; sequence GTPTFSCPESSQEQ. Residues 93-102 show a composition bias toward low complexity; it reads SSSQPSFDSS. Residues 140–183 form an inka box region; sequence EPDDWTSTLMSRGRNRQPLVLGDNVFADLVGNWLDLPELEKGGE. A compositionally biased stretch (basic residues) spans 246 to 256; it reads GRSKKVKKRSL.

The protein belongs to the INKA family. Interacts with PAK4. In terms of tissue distribution, enriched in the nervous system.

The protein resides in the nucleus. Functionally, inhibitor of the serine/threonine-protein kinase PAK4. Acts by binding PAK4 in a substrate-like manner, inhibiting the protein kinase activity. This is PAK4-inhibitor INKA2 from Mus musculus (Mouse).